The primary structure comprises 218 residues: Adenylate kinase (218 aa).

Residue 11 to 16 (GAGKGT) coordinates ATP. An NMP region spans residues 31–60 (STGDMFREAMANKTKVGLEAKSYIDKGNLV). AMP contacts are provided by residues Thr32, Arg37, 58–60 (NLV), 86–89 (GFPR), and Gln93. Residues 127–165 (ARYMCKNCGATYNKISKQPKVEGTCDRCGSHEFYQREDD) are LID. Arg128 serves as a coordination point for ATP. The Zn(2+) site is built by Cys131 and Cys134. ATP is bound at residue 137-138 (TY). Cys151 and Cys154 together coordinate Zn(2+). AMP-binding residues include Arg162 and Arg173. Gln201 serves as a coordination point for ATP.

The protein belongs to the adenylate kinase family. As to quaternary structure, monomer.

The protein localises to the cytoplasm. It carries out the reaction AMP + ATP = 2 ADP. Its pathway is purine metabolism; AMP biosynthesis via salvage pathway; AMP from ADP: step 1/1. Its function is as follows. Catalyzes the reversible transfer of the terminal phosphate group between ATP and AMP. Plays an important role in cellular energy homeostasis and in adenine nucleotide metabolism. The chain is Adenylate kinase from Lactobacillus acidophilus (strain ATCC 700396 / NCK56 / N2 / NCFM).